The following is a 305-amino-acid chain: Phosphoribosylaminoimidazole-succinocarboxamide synthase (305 aa).

The protein belongs to the SAICAR synthetase family.

It carries out the reaction 5-amino-1-(5-phospho-D-ribosyl)imidazole-4-carboxylate + L-aspartate + ATP = (2S)-2-[5-amino-1-(5-phospho-beta-D-ribosyl)imidazole-4-carboxamido]succinate + ADP + phosphate + 2 H(+). It participates in purine metabolism; IMP biosynthesis via de novo pathway; 5-amino-1-(5-phospho-D-ribosyl)imidazole-4-carboxamide from 5-amino-1-(5-phospho-D-ribosyl)imidazole-4-carboxylate: step 1/2. The sequence is that of Phosphoribosylaminoimidazole-succinocarboxamide synthase from Albidiferax ferrireducens (strain ATCC BAA-621 / DSM 15236 / T118) (Rhodoferax ferrireducens).